A 494-amino-acid polypeptide reads, in one-letter code: Tyrosinase (494 aa).

Cu cation is bound by residues His38, His53, Cys64, His224, His228, and His256.

Belongs to the tyrosinase family. It depends on Cu(2+) as a cofactor.

It carries out the reaction 2 L-dopa + O2 = 2 L-dopaquinone + 2 H2O. It catalyses the reaction L-tyrosine + O2 = L-dopaquinone + H2O. This Rhizobium meliloti (Ensifer meliloti) protein is Tyrosinase (mepA).